The chain runs to 398 residues: Succinate--CoA ligase [ADP-forming] subunit beta (398 aa).

In terms of domain architecture, ATP-grasp spans 9–254 (KRLLHEYGAP…LSEEDPKEIE (246 aa)). ATP contacts are provided by residues Lys-46, 53-55 (GRG), Glu-109, Ala-112, and Glu-117. 2 residues coordinate Mg(2+): Asn-209 and Asp-223. Substrate-binding positions include Asn-274 and 331–333 (GIM).

It belongs to the succinate/malate CoA ligase beta subunit family. In terms of assembly, heterotetramer of two alpha and two beta subunits. It depends on Mg(2+) as a cofactor.

It carries out the reaction succinate + ATP + CoA = succinyl-CoA + ADP + phosphate. The enzyme catalyses GTP + succinate + CoA = succinyl-CoA + GDP + phosphate. It functions in the pathway carbohydrate metabolism; tricarboxylic acid cycle; succinate from succinyl-CoA (ligase route): step 1/1. Succinyl-CoA synthetase functions in the citric acid cycle (TCA), coupling the hydrolysis of succinyl-CoA to the synthesis of either ATP or GTP and thus represents the only step of substrate-level phosphorylation in the TCA. The beta subunit provides nucleotide specificity of the enzyme and binds the substrate succinate, while the binding sites for coenzyme A and phosphate are found in the alpha subunit. This Bartonella tribocorum (strain CIP 105476 / IBS 506) protein is Succinate--CoA ligase [ADP-forming] subunit beta.